Here is a 573-residue protein sequence, read N- to C-terminus: Glucocorticoid modulatory element-binding protein 1 (573 aa).

Alanine 2 is subject to N-acetylalanine. Positions 82–166 (TGTIEANEDM…RKMMDSGQID (85 aa)) constitute an SAND domain. Cysteine 113 lines the Zn(2+) pocket. DNA is bound by residues lysine 139, lysine 143, lysine 146, and arginine 157. Positions 170, 174, and 178 each coordinate Zn(2+). Residues 321–367 (LDNRRNQVEQGEEQFLYTLTDLERQLEEQKKQGQDHRLKSQTVQNVV) adopt a coiled-coil conformation. A disordered region spans residues 370 to 398 (PVSTPKPPKRPRLQRPASTTVLSPSPPVQ).

As to quaternary structure, homodimer, and heterodimer of GMEB1 and GMEB2. GMEB1 and GMEB2 form the parvovirus initiator complex (PIF). Interacts with the glucocorticoid receptor (NR3C1) and NCOA2/TIF2. May interact with HSP27 and CREB-binding protein (CBP).

The protein localises to the nucleus. It is found in the cytoplasm. In terms of biological role, trans-acting factor that binds to glucocorticoid modulatory elements (GME) present in the TAT (tyrosine aminotransferase) promoter and increases sensitivity to low concentrations of glucocorticoids. Also binds to the transferrin receptor promoter. Essential auxiliary factor for the replication of parvoviruses. This is Glucocorticoid modulatory element-binding protein 1 (GMEB1) from Homo sapiens (Human).